Reading from the N-terminus, the 496-residue chain is Glutamate--tRNA ligase 2 (496 aa).

The 'HIGH' region signature appears at 13-23 (PSPTGRLHVGG). Residues 255-259 (KLSKR) carry the 'KMSKS' region motif. Lysine 258 is an ATP binding site.

This sequence belongs to the class-I aminoacyl-tRNA synthetase family. Glutamate--tRNA ligase type 1 subfamily. As to quaternary structure, monomer.

The protein localises to the cytoplasm. It carries out the reaction tRNA(Glu) + L-glutamate + ATP = L-glutamyl-tRNA(Glu) + AMP + diphosphate. Its function is as follows. Catalyzes the attachment of glutamate to tRNA(Glu) in a two-step reaction: glutamate is first activated by ATP to form Glu-AMP and then transferred to the acceptor end of tRNA(Glu). In Rubrobacter xylanophilus (strain DSM 9941 / JCM 11954 / NBRC 16129 / PRD-1), this protein is Glutamate--tRNA ligase 2.